The following is a 93-amino-acid chain: Protein S100-A8 (93 aa).

2 consecutive EF-hand domains span residues 12–47 and 46–81; these read IIDVYHKYSLIKGNFHAVYRDDLKKLLETECPQYIR and IRKKGADVWFKELDINTDGAVNFQEFLILVIKMGVA. The Zn(2+) site is built by histidine 17 and histidine 27. Aspartate 33 provides a ligand contact to Ca(2+). Position 42 is an S-nitrosocysteine (cysteine 42). The Ca(2+) site is built by aspartate 59, asparagine 61, aspartate 63, and glutamate 70. The Zn(2+) site is built by histidine 83 and histidine 87.

The protein belongs to the S-100 family. As to quaternary structure, homodimer. Preferentially exists as a heterodimer or heterotetramer with S100A9 known as calprotectin (S100A8/A9). S100A8 interacts with AGER, ATP2A2 and with the heterodimeric complex formed by TLR4 and LY96. Interacts with GAPDH. Calprotectin (S100A8/9) interacts with CEACAM3 and tubulin filaments in a calcium-dependent manner. Heterotetrameric calprotectin (S100A8/A9) interacts with ANXA6 and associates with tubulin filaments in activated monocytes. S100A8 and calprotectin (S100A8/9) interact with NCF2/P67PHOX, RAC1 and RAC2. Calprotectin (S100A8/9) interacts with CYBA and CYBB. Calprotectin (S100A8/9) interacts with NOS2 to form the iNOS-S100A8/A9 transnitrosylase complex; induced by LDL(ox). Calprotectin (S100A8/9) interacts with CD69. Calprotectin (S100A8/9) is predominantly expressed in myeloid cells. Except for inflammatory conditions, the expression is restricted to a specific stage of myeloid differentiation since both proteins are expressed in circulating neutrophils and monocytes but are absent in normal tissue macrophages and lymphocytes. Under chronic inflammatory conditions, such as psoriasis and malignant disorders, also expressed in the epidermis. Found in high concentrations at local sites of inflammation or in the serum of patients with inflammatory diseases such as rheumatoid, cystic fibrosis, inflammatory bowel disease, Crohn's disease, giant cell arteritis, cystic fibrosis, Sjogren's syndrome, systemic lupus erythematosus, and progressive systemic sclerosis. Involved in the formation and deposition of amyloids in the aging prostate known as corpora amylacea inclusions. Strongly up-regulated in many tumors, including gastric, esophageal, colon, pancreatic, bladder, ovarian, thyroid, breast and skin cancers.

Its subcellular location is the secreted. The protein localises to the cytoplasm. It is found in the cytoskeleton. It localises to the cell membrane. Its activity is regulated as follows. Calprotectin (S100A8/A9) activity on TLR4 signaling is inhibited by paquinimod. In terms of biological role, S100A8 is a calcium- and zinc-binding protein which plays a prominent role in the regulation of inflammatory processes and immune response. It can induce neutrophil chemotaxis and adhesion. Predominantly found as calprotectin (S100A8/A9) which has a wide plethora of intra- and extracellular functions. The intracellular functions include: facilitating leukocyte arachidonic acid trafficking and metabolism, modulation of the tubulin-dependent cytoskeleton during migration of phagocytes and activation of the neutrophilic NADPH-oxidase. Also participates in regulatory T-cell differentiation together with CD69. Activates NADPH-oxidase by facilitating the enzyme complex assembly at the cell membrane, transferring arachidonic acid, an essential cofactor, to the enzyme complex and S100A8 contributes to the enzyme assembly by directly binding to NCF2/P67PHOX. The extracellular functions involve pro-inflammatory, antimicrobial, oxidant-scavenging and apoptosis-inducing activities. Its pro-inflammatory activity includes recruitment of leukocytes, promotion of cytokine and chemokine production, and regulation of leukocyte adhesion and migration. Acts as an alarmin or a danger associated molecular pattern (DAMP) molecule and stimulates innate immune cells via binding to pattern recognition receptors such as Toll-like receptor 4 (TLR4) and receptor for advanced glycation endproducts (AGER). Binding to TLR4 and AGER activates the MAP-kinase and NF-kappa-B signaling pathways resulting in the amplification of the pro-inflammatory cascade. Has antimicrobial activity towards bacteria and fungi and exerts its antimicrobial activity probably via chelation of Zn(2+) which is essential for microbial growth. Can induce cell death via autophagy and apoptosis and this occurs through the cross-talk of mitochondria and lysosomes via reactive oxygen species (ROS) and the process involves BNIP3. Can regulate neutrophil number and apoptosis by an anti-apoptotic effect; regulates cell survival via ITGAM/ITGB and TLR4 and a signaling mechanism involving MEK-ERK. Its role as an oxidant scavenger has a protective role in preventing exaggerated tissue damage by scavenging oxidants. Can act as a potent amplifier of inflammation in autoimmunity as well as in cancer development and tumor spread. The iNOS-S100A8/A9 transnitrosylase complex directs selective inflammatory stimulus-dependent S-nitrosylation of GAPDH and probably multiple targets such as ANXA5, EZR, MSN and VIM by recognizing a [IL]-x-C-x-x-[DE] motif; S100A8 seems to contribute to S-nitrosylation site selectivity. Its function is as follows. (Microbial infection) Upon infection by human coronavirus SARS-CoV-2, may induce expansion of aberrant immature neutrophils in a TLR4-dependent manner. The chain is Protein S100-A8 from Homo sapiens (Human).